A 546-amino-acid polypeptide reads, in one-letter code: Probable acyl-activating enzyme 21 (546 aa).

Belongs to the ATP-dependent AMP-binding enzyme family.

In terms of biological role, may act as an acid--thiol ligase that activates carboxylic acids by forming acyl-CoAs. The polypeptide is Probable acyl-activating enzyme 21 (AEE21) (Arabidopsis thaliana (Mouse-ear cress)).